Reading from the N-terminus, the 317-residue chain is UV DNA damage endonuclease (317 aa).

This sequence belongs to the uve1/UvsE family.

In terms of biological role, component in a DNA repair pathway. Removal of UV LIGHT damaged nucleotides. Recognizes pyrimidine dimers and cleave a phosphodiester bond immediately 5' to the lesion. This chain is UV DNA damage endonuclease, found in Bacillus anthracis (strain A0248).